The chain runs to 679 residues: MSKNLLIELGLEELPAYVVTPSEKQLGERLATFLTENRLSFEDIQTFSTPRRLAVRVSGLADQQTDLTEDFKGPAKKIALDADGNFSKAAQGFVRGKGLTTDAIEFREVKGEEYVYVTKHEAGKPAKEVLLGVTEVLSAMTFPVSMHWANNSFEYIRPVHTLTVLLNDEALELDFLDIHSGRVSRGHRFLGTETTITSADSYEADLRSQCVIVDAKERQEMIVEQIKTLEVEQGVQVDIDEDLLNEVLNLVEFPTAFMGNFEAKYLDVPEEVLVTSMKNHQRYFVVRDQAGHLMPNFVSVRNGNDQAIENVIKGNEKVLVARLEDGEFFWREDQKLQIADLVAKLTNVTFHEKIGSLAEHMDRTRVIAASLAKEANLSAEEVTAVDRAAQIYKFDLLTGMVGEFDELQGIMGEKYALLAGEDAAVATAIREHYLPDAAGGALPETKVGAVLALADKLDTLLSFFSVGLIPSGSNDPYALRRATQGIVRILDHFGWRIPMDKLVDSLYDLSFDSLTYTNKADVMNFIRARVDKMMGKAAPKDIREAILASSTFVVPEMLAVAEALVKASHTENYKPAVESLSRAFNLAEKADASVQVDPSLFENEQENTLFAAIQGLTLAGSAAQQLEQVFALSPVINDFFDNTMVMAEDQALKNNRVAILSDLVSKAKTIAAFNQLNTK.

Belongs to the class-II aminoacyl-tRNA synthetase family. As to quaternary structure, tetramer of two alpha and two beta subunits.

It localises to the cytoplasm. The catalysed reaction is tRNA(Gly) + glycine + ATP = glycyl-tRNA(Gly) + AMP + diphosphate. This is Glycine--tRNA ligase beta subunit from Streptococcus pyogenes serotype M28 (strain MGAS6180).